We begin with the raw amino-acid sequence, 1325 residues long: Sperm-specific sodium:proton exchanger (1325 aa).

A signal peptide spans 1–29; the sequence is MKKRVVKLRELVPAVAALAVAVLIQSATG. Positions 28–68 are disordered; sequence TGSSGGSGHTPTTQATHADDHDLTTHNGTEEHDDGHDDGHD. Residues 30-76 lie on the Extracellular side of the membrane; the sequence is SSGGSGHTPTTQATHADDHDLTTHNGTEEHDDGHDDGHDDLHAHAPK. Residues 44–68 show a composition bias toward basic and acidic residues; the sequence is HADDHDLTTHNGTEEHDDGHDDGHD. An a 1,2-diacylglycero-3-phosphate-binding site is contributed by H73. Residues 77-96 traverse the membrane as a helical segment; sequence VIVFISGSCLFGAISRSLFK. The Cytoplasmic segment spans residues 97–101; sequence KLPIP. A helical membrane pass occupies residues 102-119; it reads YTVVLLILGAILGVVASN. Residues 120–135 are Extracellular-facing; that stretch reads VPLVEEHTRDVAHMDP. The chain crosses the membrane as a helical span at residues 136–152; that stretch reads HVLLQIFLPVLIFESAF. At 153–162 the chain is on the cytoplasmic side; the sequence is AMDVHTFMRS. The helical transmembrane segment at 163–188 threads the bilayer; sequence FSQVCILALFGLVVASVLTAVLAMNL. Residues 163-250 form a transport core domain region; it reads FSQVCILALF…AIVIFNVFMK (88 aa). Residues 189 to 194 are Extracellular-facing; the sequence is FNYNWN. A helical transmembrane segment spans residues 195–220; it reads FSEAMMFGAIMSATDPVAVVALLKDL. The Cytoplasmic segment spans residues 221-223; that stretch reads GAS. Residues 224–249 traverse the membrane as a helical segment; it reads KQLGTIIEGESLLNDGCAIVIFNVFM. The Essential for sodium:proton exchange motif lies at 237–238; the sequence is ND. Residues 250 to 260 are Extracellular-facing; the sequence is KMVFFPQLTST. The helical transmembrane segment at 261–292 threads the bilayer; it reads VGQNVLYFLQVAVAGPLWGYAVAKVTVFFLSH. The Cytoplasmic portion of the chain corresponds to 293-296; that stretch reads IFND. A helical transmembrane segment spans residues 297–319; the sequence is ALVEITITLAATYLTYYIGDIWL. Over 320 to 322 the chain is Extracellular; it reads EVS. The helical transmembrane segment at 323 to 336 threads the bilayer; it reads GVLAVVVLGLIVNA. The Cytoplasmic segment spans residues 337-343; that stretch reads EKTSISP. A helical transmembrane segment spans residues 344 to 377; that stretch reads EVEVFLHRFWEMLAYLANTLIFMMVGVVVTQKAL. The Extracellular portion of the chain corresponds to 378 to 382; sequence VAVDK. A helical transmembrane segment spans residues 383–412; sequence MDWFYLIILYLAITIIRGMVISLFSPILSR. The segment at 383-481 is transport core domain; the sequence is MDWFYLIILY…TTIQTLLRIL (99 aa). Residues 413–418 are Cytoplasmic-facing; the sequence is IGYGLT. A helical membrane pass occupies residues 419 to 446; the sequence is WRNAVIMTWGGLRGAVGLALALVVENLA. The Extracellular segment spans residues 447-450; sequence GNDV. Residues 451-481 form a helical membrane-spanning segment; it reads IGSKFLFHTAGIVVLTLVINATTIQTLLRIL. Residues 482–677 are Cytoplasmic-facing; the sequence is GMSDISIPKR…GKLMYKICHH (196 aa). The interval 575–620 is interacts with the S4 segment of voltage sensor domain; it reads FADMMEEARLRMLKAEKISYWKQFEHGMLAREALRLLVQHAEVAAD. Positions 605-620 are interacts with the transport core domain; can lock the transporter in the inward conformation; sequence REALRLLVQHAEVAAD. A helical transmembrane segment spans residues 678–708; sequence MAFEVTINIAIVLNIVPIIMEFVVQDKMASV. Over 709-724 the chain is Extracellular; it reads STMAAPGSTVSSEPSS. A helical transmembrane segment spans residues 725–752; sequence LQKIEDALRISNYVFFVIYAIEAIVKIL. Residues 753–760 lie on the Cytoplasmic side of the membrane; it reads GLGRHYIV. Residues 761–784 traverse the membrane as a helical segment; it reads SHWNKFDAFILVVALVDIIIAETL. The Extracellular portion of the chain corresponds to 785-795; the sequence is LKGSITINLSS. The helical transmembrane segment at 796-822 threads the bilayer; that stretch reads IKVVKLFRLLRGLRMLRLTKALIPKLI. The segment at 796–857 is S4 segment of voltage sensor domain; that stretch reads IKVVKLFRLL…EEVGKIIDRM (62 aa). Residues 823–1325 lie on the Cytoplasmic side of the membrane; that stretch reads LVVNGKINNQ…EEGAAPRVNV (503 aa). Positions 860-919 are interacts with the S4 segment of voltage sensor domain; it reads NKKILRELKHISETGRLQVVKELGLLQREHPGIAVSVKTRQAIRTILNHSRETIHELQGA. The segment at 968 to 1068 is cNMP-binding domain; it reads KLIDFIKARA…CETTVQVYFI (101 aa). Position 1043 (G1043) interacts with 3',5'-cyclic AMP. 3',5'-cyclic GMP contacts are provided by G1043, E1044, and M1045. Positions 1045, 1046, 1053, and 1054 each coordinate 3',5'-cyclic AMP. Positions 1053 and 1054 each coordinate 3',5'-cyclic GMP. The interval 1237–1325 is disordered; the sequence is MLSRKSSGAA…EEGAAPRVNV (89 aa). Low complexity predominate over residues 1266 to 1280; sequence VSPSVPTKTTPKPKS.

Belongs to the monovalent cation:proton antiporter 1 (CPA1) transporter (TC 2.A.36) family. As to quaternary structure, homodimer; the dimerization is stabilized in the presence of phosphatidic acids.

The protein resides in the cell projection. It is found in the cilium. It localises to the flagellum membrane. It catalyses the reaction Na(+)(in) + H(+)(out) = Na(+)(out) + H(+)(in). Its activity is regulated as follows. Gated by voltage and stimulated by cyclic nucleotides which shift the activation voltage closer to resting membrane potential. Not inhibited by common sodium:proton exchanger inhibitors such as amiloride. In terms of biological role, electroneutral sodium:proton antiporter that regulates intracellular pH of sperm along with capacitation and fertility. Activated in response to egg-derived chemoattractants, couples membrane voltage to sodium:proton exchange and transduces membrane hyperpolarization to cytoplasmic alkalization to cAMP signaling and ultimately to sperm motility. In Strongylocentrotus purpuratus (Purple sea urchin), this protein is Sperm-specific sodium:proton exchanger.